The chain runs to 57 residues: UPF0391 membrane protein Patl_0263 (57 aa).

Helical transmembrane passes span 8-28 (FFVL…GVAA) and 30-50 (IAKV…VLAF).

Belongs to the UPF0391 family.

Its subcellular location is the cell membrane. The protein is UPF0391 membrane protein Patl_0263 of Pseudoalteromonas atlantica (strain T6c / ATCC BAA-1087).